Here is a 629-residue protein sequence, read N- to C-terminus: Arginine--tRNA ligase (629 aa).

The 'HIGH' region signature appears at 128–138 (VNPTKPLHMGH).

The protein belongs to the class-I aminoacyl-tRNA synthetase family.

The protein resides in the cytoplasm. It catalyses the reaction tRNA(Arg) + L-arginine + ATP = L-arginyl-tRNA(Arg) + AMP + diphosphate. The chain is Arginine--tRNA ligase from Pyrococcus furiosus (strain ATCC 43587 / DSM 3638 / JCM 8422 / Vc1).